A 244-amino-acid chain; its full sequence is MWLGDYSLINLLGIFLQATFIQNILLSTFLGMCSYLACSSRLSTANGLGMSVALVLTITGSINWLIHHFVTGPHALSWLSPALANIDLSFLELITFIVVIAAFTQILELLLERFSRNLYLALGIFLPLIAVNCAILGGVLFGITRNYPFLPMVVFSLGSGCGWWLAIVLFATIREKLAYSDIPQHLQGMGISFITTGLIAMAFMGLTGIDISKPTAKSVVISDTSTNKSKTTSAQERLSSNHKA.

The next 6 helical transmembrane spans lie at 11–31 (LLGIFLQATFIQNILLSTFLG), 47–67 (GLGMSVALVLTITGSINWLIH), 90–110 (FLELITFIVVIAAFTQILELL), 123–143 (GIFLPLIAVNCAILGGVLFGI), 153–173 (VVFSLGSGCGWWLAIVLFATI), and 189–209 (MGISFITTGLIAMAFMGLTGI).

Belongs to the NqrDE/RnfAE family. As to quaternary structure, composed of six subunits; NqrA, NqrB, NqrC, NqrD, NqrE and NqrF.

Its subcellular location is the cell inner membrane. The enzyme catalyses a ubiquinone + n Na(+)(in) + NADH + H(+) = a ubiquinol + n Na(+)(out) + NAD(+). Its function is as follows. NQR complex catalyzes the reduction of ubiquinone-1 to ubiquinol by two successive reactions, coupled with the transport of Na(+) ions from the cytoplasm to the periplasm. NqrA to NqrE are probably involved in the second step, the conversion of ubisemiquinone to ubiquinol. This chain is Na(+)-translocating NADH-quinone reductase subunit E, found in Chlamydia muridarum (strain MoPn / Nigg).